The sequence spans 107 residues: U1-lycotoxin-Ls1m (107 aa).

The signal sequence occupies residues 1–20 (MMKVLVVVALLVTLISYSSS). A propeptide spanning residues 21 to 41 (EGIDDLEADELLSLMANEQTR) is cleaved from the precursor. 4 disulfide bridges follow: Cys-44-Cys-59, Cys-51-Cys-68, Cys-58-Cys-86, and Cys-70-Cys-84.

Belongs to the neurotoxin 19 (CSTX) family. 04 (U1-Lctx) subfamily. Expressed by the venom gland.

The protein resides in the secreted. The chain is U1-lycotoxin-Ls1m from Lycosa singoriensis (Wolf spider).